Reading from the N-terminus, the 190-residue chain is Pyridoxal 5'-phosphate synthase subunit PdxT (190 aa).

An L-glutamine-binding site is contributed by 46–48 (GES). The active-site Nucleophile is the C78. Residues R108 and 137-138 (IR) each bind L-glutamine. Residues H174 and E176 each act as charge relay system in the active site.

It belongs to the glutaminase PdxT/SNO family. In terms of assembly, in the presence of PdxS, forms a dodecamer of heterodimers. Only shows activity in the heterodimer.

It carries out the reaction aldehydo-D-ribose 5-phosphate + D-glyceraldehyde 3-phosphate + L-glutamine = pyridoxal 5'-phosphate + L-glutamate + phosphate + 3 H2O + H(+). It catalyses the reaction L-glutamine + H2O = L-glutamate + NH4(+). It participates in cofactor biosynthesis; pyridoxal 5'-phosphate biosynthesis. In terms of biological role, catalyzes the hydrolysis of glutamine to glutamate and ammonia as part of the biosynthesis of pyridoxal 5'-phosphate. The resulting ammonia molecule is channeled to the active site of PdxS. This Herpetosiphon aurantiacus (strain ATCC 23779 / DSM 785 / 114-95) protein is Pyridoxal 5'-phosphate synthase subunit PdxT.